The chain runs to 122 residues: Large ribosomal subunit protein uL18 (122 aa).

The interval 1–27 (MATLSKKQQTQKRHKRLRRHLNGTNHR) is disordered. Residues 9-27 (QTQKRHKRLRRHLNGTNHR) show a composition bias toward basic residues.

Belongs to the universal ribosomal protein uL18 family. Part of the 50S ribosomal subunit; part of the 5S rRNA/L5/L18/L25 subcomplex. Contacts the 5S and 23S rRNAs.

Its function is as follows. This is one of the proteins that bind and probably mediate the attachment of the 5S RNA into the large ribosomal subunit, where it forms part of the central protuberance. This is Large ribosomal subunit protein uL18 from Prochlorococcus marinus (strain MIT 9211).